A 357-amino-acid polypeptide reads, in one-letter code: MFLEKLSPIESKIKILEEKLQDINLVKNQKEYAKTVKEYNYLEKIKAKKDEYENILSQINENQKILSEEENLEMKELVKQELAHLNLKKDEVEHMIKILLLHQDENDSKNIIIEIRAGTGGEEAALFAHNLYEMYTKYSEKKKWKTELINFNETELGGFKEVSFEIKGKDVFKKLKHESGVHRVQRVPITESNGRLQTSAATVAVLPEVEDTDIEINEKDLRIDVYRSSGAGGQHVNTTDSAVRITHLPTGIVVQCQNERSQHKNKDQAMKILRARLYEFENLKKQEQRSNDRKQQVGSGDRSERIRTYNFPQNRVTDHRANISLYKLEEIMQGELDFLLDTLALKFQEQSLKDNSI.

The residue at position 234 (glutamine 234) is an N5-methylglutamine. Residues 284–307 show a composition bias toward basic and acidic residues; it reads KKQEQRSNDRKQQVGSGDRSERIR. A disordered region spans residues 284–313; that stretch reads KKQEQRSNDRKQQVGSGDRSERIRTYNFPQ.

The protein belongs to the prokaryotic/mitochondrial release factor family. In terms of processing, methylated by PrmC. Methylation increases the termination efficiency of RF1.

It localises to the cytoplasm. Peptide chain release factor 1 directs the termination of translation in response to the peptide chain termination codons UAG and UAA. This chain is Peptide chain release factor 1, found in Borrelia hermsii (strain HS1 / DAH).